We begin with the raw amino-acid sequence, 1013 residues long: Alpha-2-macroglobulin homolog (1013 aa).

A disordered region spans residues 804-844 (AQRGANGERDGLRETVPVRPAGARQLLSGSGSVGADKAGGN).

This sequence belongs to the protease inhibitor I39 (alpha-2-macroglobulin) family. Bacterial alpha-2-macroglobulin subfamily.

This is Alpha-2-macroglobulin homolog from Deinococcus radiodurans (strain ATCC 13939 / DSM 20539 / JCM 16871 / CCUG 27074 / LMG 4051 / NBRC 15346 / NCIMB 9279 / VKM B-1422 / R1).